We begin with the raw amino-acid sequence, 334 residues long: GTP 3',8-cyclase (334 aa).

A Radical SAM core domain is found at 13-239 (RFHRKFYYLR…KVKAANDGPA (227 aa)). Arg-22 provides a ligand contact to GTP. The [4Fe-4S] cluster site is built by Cys-29 and Cys-33. Residue Tyr-35 coordinates S-adenosyl-L-methionine. Residue Cys-36 participates in [4Fe-4S] cluster binding. Arg-73 is a GTP binding site. An S-adenosyl-L-methionine-binding site is contributed by Gly-77. GTP is bound at residue Thr-104. Residue Ser-128 coordinates S-adenosyl-L-methionine. Lys-165 is a GTP binding site. Position 199 (Met-199) interacts with S-adenosyl-L-methionine. Cys-262 and Cys-265 together coordinate [4Fe-4S] cluster. 267 to 269 (RLR) is a GTP binding site. A [4Fe-4S] cluster-binding site is contributed by Cys-279.

It belongs to the radical SAM superfamily. MoaA family. In terms of assembly, monomer and homodimer. Requires [4Fe-4S] cluster as cofactor.

The enzyme catalyses GTP + AH2 + S-adenosyl-L-methionine = (8S)-3',8-cyclo-7,8-dihydroguanosine 5'-triphosphate + 5'-deoxyadenosine + L-methionine + A + H(+). The protein operates within cofactor biosynthesis; molybdopterin biosynthesis. Its function is as follows. Catalyzes the cyclization of GTP to (8S)-3',8-cyclo-7,8-dihydroguanosine 5'-triphosphate. The chain is GTP 3',8-cyclase from Vibrio vulnificus (strain YJ016).